A 417-amino-acid chain; its full sequence is Snake venom metalloproteinase kistomin (417 aa).

Residues M1–S20 form the signal peptide. Positions I21–P189 are excised as a propeptide. Residues A197–P391 enclose the Peptidase M12B domain. 3 disulfides stabilise this stretch: C308–C386, C348–C370, and C350–C353. H333 lines the Zn(2+) pocket. The active site involves E334. 2 residues coordinate Zn(2+): H337 and H343. The propeptide occupies L392–A417.

The protein belongs to the venom metalloproteinase (M12B) family. P-I subfamily. As to quaternary structure, monomer. Zn(2+) serves as cofactor. As to expression, expressed by the venom gland.

The protein resides in the secreted. With respect to regulation, inhibited by EDTA, and O-phenanthrolene. Snake venom zinc metalloprotease that inhibits platelet aggregation by binding specifically to platelet glycoprotein VI (GP6) and platelet glycoprotein Ib alpha (GP1BA). It inhibits the interaction between collagen and platelet GP6 by cleaving GP6 (at '225-Glu-|-Ala-226' and '238-Val-|-Phe-239' bonds), and inhibits vWF-induced platelet aggregation by cleaving GP1BA and vWF. Cleavage of GP1BA occurs at two distinct sites to generate two soluble fragments. It also cleaves alpha- (FGA) and subsequently the gamma-chain (FGG) of fibrinogen, leaving the beta-chain unaffected. It also inhibits collagen-, convulxin- and ristocetin-induced platelet aggregation. It blocks the adhesion of platelet to immobilized collagen, but only exerts a slight inhibition to fibrinogen. In vivo, it exerts potent antithrombotic effect. This chain is Snake venom metalloproteinase kistomin, found in Calloselasma rhodostoma (Malayan pit viper).